The chain runs to 298 residues: Elongation factor Ts (298 aa).

An involved in Mg(2+) ion dislocation from EF-Tu region spans residues 80 to 83; that stretch reads TDFV.

This sequence belongs to the EF-Ts family.

The protein localises to the cytoplasm. Its function is as follows. Associates with the EF-Tu.GDP complex and induces the exchange of GDP to GTP. It remains bound to the aminoacyl-tRNA.EF-Tu.GTP complex up to the GTP hydrolysis stage on the ribosome. The polypeptide is Elongation factor Ts (Paracidovorax citrulli (strain AAC00-1) (Acidovorax citrulli)).